A 98-amino-acid polypeptide reads, in one-letter code: UPF0235 protein Pmen_4153 (98 aa).

Belongs to the UPF0235 family.

The protein is UPF0235 protein Pmen_4153 of Ectopseudomonas mendocina (strain ymp) (Pseudomonas mendocina).